The chain runs to 180 residues: Large ribosomal subunit protein uL5 (180 aa).

Belongs to the universal ribosomal protein uL5 family. As to quaternary structure, part of the 50S ribosomal subunit; part of the 5S rRNA/L5/L18/L25 subcomplex. Contacts the 5S rRNA and the P site tRNA. Forms a bridge to the 30S subunit in the 70S ribosome.

Functionally, this is one of the proteins that bind and probably mediate the attachment of the 5S RNA into the large ribosomal subunit, where it forms part of the central protuberance. In the 70S ribosome it contacts protein S13 of the 30S subunit (bridge B1b), connecting the 2 subunits; this bridge is implicated in subunit movement. Contacts the P site tRNA; the 5S rRNA and some of its associated proteins might help stabilize positioning of ribosome-bound tRNAs. The polypeptide is Large ribosomal subunit protein uL5 (Clostridium botulinum (strain ATCC 19397 / Type A)).